We begin with the raw amino-acid sequence, 289 residues long: LBH domain-containing protein 1 (289 aa).

2 disordered regions span residues Met1–Asp36 and Glu205–Asp289. An LBH domain is found at Met1–Glu128. A compositionally biased stretch (polar residues) spans Thr15–Pro25.

Expressed in bladder cancer tissues (at protein level).

In Homo sapiens (Human), this protein is LBH domain-containing protein 1.